We begin with the raw amino-acid sequence, 1268 residues long: Meiosis inhibitor protein 1 (1268 aa).

In terms of tissue distribution, strongly expressed in testis, weakly in brain, and not detected in spleen, liver, kidney, small intestine or colon.

Functionally, required for normal meiotic chromosome synapsis. May be involved in the formation of meiotic double-strand breaks (DSBs) in spermatocytes. The chain is Meiosis inhibitor protein 1 from Mus musculus (Mouse).